Here is a 375-residue protein sequence, read N- to C-terminus: MSAVKLEAIVCHEPDESELSHLSDNGSKTKNGVVFQLLDQKSSEHRWFSERFLRWRRRYLPVDGDNRRDHGSVKQSGPLVSGAAYCISSCSMIILNKIVLSSYNFNAGVSLMLYQNLISCLVVAVLDISGVVSVEKFNWKLIRVWMPVNVIFVGMLVSGMYSLKYINVAMVTILKNATNILTGIGEVYMFRKRQNNKVWAAMFMMIISAISGGITDLTFDAVGYTWQLANCFLTASYSLTLRRVMDKAKQSTKSGSLNEVSMVLLNNLLSIPFGIILIILLGEWRYVISTDVTKDSMFWVVATASGFLGLAISFTSMWFLHQTGPTTYSLVGSLNKVPISLAGLVLFNVPLSLPNLFSILFGLFAGVVFARAKMS.

The next 9 membrane-spanning stretches (helical) occupy residues 79–99, 112–132, 141–161, 165–185, 199–219, 262–282, 300–320, 327–347, and 349–369; these read LVSG…NKIV, MLYQ…SGVV, LIRV…SGMY, YINV…TGIG, WAAM…DLTF, MVLL…ILLG, VVAT…MWFL, TYSL…LVLF, and VPLS…GVVF.

This sequence belongs to the nucleotide-sugar transporter family. GDP-Mannose:GMP antiporter (GMA) (TC 2.A.7.13) subfamily. Expressed in rosette leaves, stems, flowers and siliques.

It localises to the golgi apparatus membrane. Functionally, GDP-mannose transporter that may be involved in the import of GDP-mannose from the cytoplasm into the Golgi lumen. This chain is GDP-mannose transporter GONST2, found in Arabidopsis thaliana (Mouse-ear cress).